Here is a 400-residue protein sequence, read N- to C-terminus: S-adenosylmethionine synthase (400 aa).

Histidine 17 is a binding site for ATP. A Mg(2+)-binding site is contributed by aspartate 19. A K(+)-binding site is contributed by glutamate 45. Glutamate 58 and glutamine 101 together coordinate L-methionine. The flexible loop stretch occupies residues 101 to 111; the sequence is QSPDIAMGVDQ. Residues 177–179, 244–245, aspartate 253, 259–260, alanine 276, and lysine 280 each bind ATP; these read DGK, RF, and RK. Position 253 (aspartate 253) interacts with L-methionine. Lysine 284 lines the L-methionine pocket.

The protein belongs to the AdoMet synthase family. In terms of assembly, homotetramer; dimer of dimers. Requires Mg(2+) as cofactor. It depends on K(+) as a cofactor.

It localises to the cytoplasm. The catalysed reaction is L-methionine + ATP + H2O = S-adenosyl-L-methionine + phosphate + diphosphate. Its pathway is amino-acid biosynthesis; S-adenosyl-L-methionine biosynthesis; S-adenosyl-L-methionine from L-methionine: step 1/1. Catalyzes the formation of S-adenosylmethionine (AdoMet) from methionine and ATP. The overall synthetic reaction is composed of two sequential steps, AdoMet formation and the subsequent tripolyphosphate hydrolysis which occurs prior to release of AdoMet from the enzyme. The polypeptide is S-adenosylmethionine synthase (Bacillus licheniformis (strain ATCC 14580 / DSM 13 / JCM 2505 / CCUG 7422 / NBRC 12200 / NCIMB 9375 / NCTC 10341 / NRRL NRS-1264 / Gibson 46)).